Consider the following 657-residue polypeptide: Hemocyanin B chain (657 aa).

A disulfide bond links Cys93 and Cys98. A glycan (N-linked (GlcNAc...) asparagine) is linked at Asn167. 6 residues coordinate Cu cation: His194, His198, His224, His344, His348, and His384. 2 disulfide bridges follow: Cys483–Cys502 and Cys562–Cys609.

The protein belongs to the tyrosinase family. Hemocyanin subfamily. In terms of assembly, hexamer of a number of different chains, of which A, B, and C have been identified. As to expression, hemolymph.

It localises to the secreted. The protein localises to the extracellular space. Hemocyanins are copper-containing oxygen carriers occurring freely dissolved in the hemolymph of many mollusks and arthropods. The polypeptide is Hemocyanin B chain (Panulirus interruptus (California spiny lobster)).